Reading from the N-terminus, the 367-residue chain is MQAPRELAVGIDLGTTYSCVGVFQQGRVEILANDQGNRTTPSYVAFTDTERLVGDAAKSQAALNPHNTVFDAKRLIGRKFADTTVQSDMKHWPFQVVSEGGKPKVRVCYRGEDKTFYPEEISSMVLSKMKETAEAYLGQPVKHAVITVPTYFSNSQRQATKDAGAIAGLKVLPIINEATAAAIAYGLDRRGAGKRNVLIFDLGGGTFDVSVLSIDAGVFEVKATAGDTHLGGEDFDNRLVNHFMEEFRRKHGKDLSGNKRALRRLRTACERAKRTPSSSTQATLEIDSLFEGVDFYKSITRARFEELCSDLFRSTLEPVEKALRDAKLDKAQIHDFVLGGGLHSHPQGAEVAAGLLQRQGAEQEHQP.

The protein belongs to the heat shock protein 70 family.

This Homo sapiens (Human) protein is Putative heat shock 70 kDa protein 7 (HSPA7).